A 1048-amino-acid polypeptide reads, in one-letter code: Pleckstrin homology domain-containing family A member 6 (1048 aa).

Positions 1–22 are enriched in polar residues; it reads MSNKTGGKRPATTNSDIPNHNM. A disordered region spans residues 1–36; it reads MSNKTGGKRPATTNSDIPNHNMVSEVPPERPSVRAT. The PH domain maps to 59–158; the sequence is PVTKAGWLFK…WIQAMGEAAR (100 aa). 2 disordered regions span residues 165–318 and 448–467; these read QKSV…MNQL and SLQP…SYSR. Residues 201 to 233 are compositionally biased toward basic and acidic residues; it reads PEPEAKTRGEGDGRGCEKAERRPERPEVKKEPP. A phosphoserine mark is found at serine 247 and serine 251. Over residues 267–290 the composition is skewed to polar residues; it reads AQPNGWQYHSPSRPGSTAFPSQDG. Residues serine 314, serine 459, serine 461, and serine 472 each carry the phosphoserine modification. A compositionally biased stretch (polar residues) spans 456–465; that stretch reads VPRSPSQGSY. Residue tyrosine 492 is modified to Phosphotyrosine. Phosphoserine is present on serine 591. Residues 663-746 are disordered; sequence RKNNPSRGTD…HQTLPLDTPR (84 aa). Low complexity predominate over residues 687-711; that stretch reads SSNSPASPLSSASLTSPLSPFSLVS. The span at 712–721 shows a compositional bias: polar residues; sequence GSQGSPTKPG. Threonine 744 carries the post-translational modification Phosphothreonine. Phosphoserine is present on serine 777. The residue at position 784 (threonine 784) is a Phosphothreonine. Residues 793–858 form a disordered region; that stretch reads ASGLTNGLSS…PAPDPSPRPA (66 aa). Positions 794–803 are enriched in polar residues; it reads SGLTNGLSSQ. Serine 801 carries the phosphoserine modification. Positions 815–827 are enriched in basic and acidic residues; sequence GKVKMSVEEQIDR. Basic residues predominate over residues 828–842; sequence MRRHQSGSMREKRRS. Serine 848, serine 854, and serine 867 each carry phosphoserine. Residue threonine 920 is modified to Phosphothreonine. At serine 940 the chain carries Phosphoserine. 2 disordered regions span residues 968-989 and 1005-1048; these read PIGE…QEQE and RGRM…TMRV. A Phosphothreonine modification is found at threonine 1015. Pro residues predominate over residues 1016 to 1030; sequence PSPPTSPASPAPPAN. At serine 1017 the chain carries Phosphoserine. At threonine 1020 the chain carries Phosphothreonine. Phosphoserine occurs at positions 1021 and 1024.

In terms of tissue distribution, highly expressed in heart, kidney and throughout the brain.

The protein is Pleckstrin homology domain-containing family A member 6 (PLEKHA6) of Homo sapiens (Human).